Consider the following 349-residue polypeptide: Heat-inducible transcription repressor HrcA (349 aa).

This sequence belongs to the HrcA family.

Negative regulator of class I heat shock genes (grpE-dnaK-dnaJ and groELS operons). Prevents heat-shock induction of these operons. This Mycoplasmoides gallisepticum (strain R(low / passage 15 / clone 2)) (Mycoplasma gallisepticum) protein is Heat-inducible transcription repressor HrcA.